We begin with the raw amino-acid sequence, 59 residues long: MARYRRNRSRSRSRRRRRRRGGRGGRRGRRRRRHGQRRRGRRGRERTRRRRRRRRRSSS.

The disordered stretch occupies residues 1–59 (MARYRRNRSRSRSRRRRRRRGGRGGRRGRRRRRHGQRRRGRRGRERTRRRRRRRRRSSS).

The protein belongs to the protamine P1 family. Testis.

Its subcellular location is the nucleus. The protein localises to the chromosome. Its function is as follows. Protamines substitute for histones in the chromatin of sperm during the haploid phase of spermatogenesis. They compact sperm DNA into a highly condensed, stable and inactive complex. The sequence is that of Sperm protamine P1-type from Chrysemys picta bellii (Western painted turtle).